A 1087-amino-acid polypeptide reads, in one-letter code: Collagen alpha-2(I) chain (1087 aa).

The interval 1–931 is disordered; that stretch reads APDPGPGPMG…PGPAGGGYDV (931 aa). 3 stretches are compositionally biased toward low complexity: residues 83 to 120, 150 to 159, and 166 to 187; these read EPGA…AAGP, EPGPNGAVGP, and PGNN…AGAP. Residues 189 to 199 are compositionally biased toward pro residues; it reads FPGPRGGPGPQ. Positions 201–211 are enriched in low complexity; sequence PQGAAGQRGLA. Over residues 218–227 the composition is skewed to gly residues; that stretch reads GVKGDGGPKG. Low complexity-rich tracts occupy residues 228–241, 278–321, 335–345, 360–384, and 396–408; these read EPGN…PGPQ, AAGP…AGPS, PRGQPGNLGFP, KGAT…TGAT, and QGAA…QGLP. The span at 409–418 shows a compositional bias: gly residues; that stretch reads GPAGGAGEAG. Low complexity predominate over residues 443-453; the sequence is NPGAAGASGPQ. A compositionally biased stretch (gly residues) spans 466-493; that stretch reads GTDGGKGEPGAAGAAGGPGHQGPGGMPG. Positions 504-515 are enriched in basic and acidic residues; the sequence is KGEKGEAGHRGP. 3 stretches are compositionally biased toward low complexity: residues 560-602, 613-640, and 677-695; these read PAGA…TGAR, FPGA…PAGK, and PGPA…LGLQ. A compositionally biased stretch (gly residues) spans 708–717; sequence GSPGGAGAVG. Composition is skewed to low complexity over residues 718-740 and 776-788; these read EPGR…LGLP and PGSS…AGAP. The span at 792 to 812 shows a compositional bias: gly residues; it reads GPSGGAGRGNRGESGPGGAAG. Low complexity predominate over residues 813–828; the sequence is AVGPAGARGAAGPSGP. Residues 829 to 843 are compositionally biased toward basic and acidic residues; sequence RGEKGVAGEKGERGL. 2 stretches are compositionally biased toward low complexity: residues 849 to 868 and 897 to 909; these read LQGM…AGPN and APGA…YVGP. A compositionally biased stretch (pro residues) spans 910–924; that stretch reads AGPPGSPGLPGPPGP. The region spanning 929-1087 is the Fibrillar collagen NC1 domain; sequence YDVSGYDEYR…GLDLGPVCFK (159 aa).

This sequence belongs to the fibrillar collagen family.

The protein resides in the secreted. It localises to the extracellular space. The protein localises to the extracellular matrix. The polypeptide is Collagen alpha-2(I) chain (Epinephelus costae (Goldblotch grouper)).